A 441-amino-acid chain; its full sequence is Probable glycine dehydrogenase (decarboxylating) subunit 1 (441 aa).

The protein belongs to the GcvP family. N-terminal subunit subfamily. The glycine cleavage system is composed of four proteins: P, T, L and H. In this organism, the P 'protein' is a heterodimer of two subunits.

It carries out the reaction N(6)-[(R)-lipoyl]-L-lysyl-[glycine-cleavage complex H protein] + glycine + H(+) = N(6)-[(R)-S(8)-aminomethyldihydrolipoyl]-L-lysyl-[glycine-cleavage complex H protein] + CO2. In terms of biological role, the glycine cleavage system catalyzes the degradation of glycine. The P protein binds the alpha-amino group of glycine through its pyridoxal phosphate cofactor; CO(2) is released and the remaining methylamine moiety is then transferred to the lipoamide cofactor of the H protein. The sequence is that of Probable glycine dehydrogenase (decarboxylating) subunit 1 from Halobacterium salinarum (strain ATCC 700922 / JCM 11081 / NRC-1) (Halobacterium halobium).